A 133-amino-acid chain; its full sequence is Small ribosomal subunit protein uS11 (133 aa).

This sequence belongs to the universal ribosomal protein uS11 family. As to quaternary structure, part of the 30S ribosomal subunit.

Its function is as follows. Located on the platform of the 30S subunit. The chain is Small ribosomal subunit protein uS11 from Hyperthermus butylicus (strain DSM 5456 / JCM 9403 / PLM1-5).